We begin with the raw amino-acid sequence, 555 residues long: GPI-anchor transamidase component PIGS (555 aa).

Residues 2–18 (AAAGAAATDLEVVRGKR) lie on the Cytoplasmic side of the membrane. A cardiolipin is bound by residues Arg-15 and Arg-18. The helical transmembrane segment at 19–39 (SALFFAAVAILLGLPLWWKTT) threads the bilayer. Topologically, residues 40-517 (ETYRAPLPYS…LHLLYFPDDQ (478 aa)) are lumenal. 2 N-linked (GlcNAc...) asparagine glycosylation sites follow: Asn-267 and Asn-370. The helical transmembrane segment at 518-532 (KFAIYIPLFLPMAVP) threads the bilayer. The Cytoplasmic portion of the chain corresponds to 533 to 555 (ILLSLVKIFQETRKSWKKPEKID).

This sequence belongs to the PIGS family. As to quaternary structure, heteropentamer. Part of the GPI-anchor transamidase complex, consisting of PIGK, PIGT, PIGS, PIGU and GAA1.

It localises to the endoplasmic reticulum membrane. It participates in glycolipid biosynthesis; glycosylphosphatidylinositol-anchor biosynthesis. Component of the glycosylphosphatidylinositol-anchor (GPI-anchor) transamidase (GPI-T) complex that catalyzes the formation of the linkage between a proprotein and a GPI-anchor and participates in GPI anchored protein biosynthesis. This Mus musculus (Mouse) protein is GPI-anchor transamidase component PIGS.